Reading from the N-terminus, the 258-residue chain is Phosphate import ATP-binding protein PstB (258 aa).

The ABC transporter domain maps to 5–247; sequence LDLKDVNIYY…EKIFSNPTQK (243 aa). 37–44 is an ATP binding site; sequence GPSGCGKS.

This sequence belongs to the ABC transporter superfamily. Phosphate importer (TC 3.A.1.7) family. As to quaternary structure, the complex is composed of two ATP-binding proteins (PstB), two transmembrane proteins (PstC and PstA) and a solute-binding protein (PstS).

It localises to the cell membrane. It carries out the reaction phosphate(out) + ATP + H2O = ADP + 2 phosphate(in) + H(+). Part of the ABC transporter complex PstSACB involved in phosphate import. Responsible for energy coupling to the transport system. The chain is Phosphate import ATP-binding protein PstB from Rhodococcus jostii (strain RHA1).